A 167-amino-acid polypeptide reads, in one-letter code: S-ribosylhomocysteine lyase (167 aa).

Residues histidine 54, histidine 58, and cysteine 128 each coordinate Fe cation.

Belongs to the LuxS family. As to quaternary structure, homodimer. The cofactor is Fe cation.

It carries out the reaction S-(5-deoxy-D-ribos-5-yl)-L-homocysteine = (S)-4,5-dihydroxypentane-2,3-dione + L-homocysteine. Involved in the synthesis of autoinducer 2 (AI-2) which is secreted by bacteria and is used to communicate both the cell density and the metabolic potential of the environment. The regulation of gene expression in response to changes in cell density is called quorum sensing. Catalyzes the transformation of S-ribosylhomocysteine (RHC) to homocysteine (HC) and 4,5-dihydroxy-2,3-pentadione (DPD). This chain is S-ribosylhomocysteine lyase, found in Haemophilus influenzae (strain 86-028NP).